Here is a 221-residue protein sequence, read N- to C-terminus: ATP phosphoribosyltransferase (221 aa).

It belongs to the ATP phosphoribosyltransferase family. Short subfamily. Heteromultimer composed of HisG and HisZ subunits.

The protein localises to the cytoplasm. The enzyme catalyses 1-(5-phospho-beta-D-ribosyl)-ATP + diphosphate = 5-phospho-alpha-D-ribose 1-diphosphate + ATP. The protein operates within amino-acid biosynthesis; L-histidine biosynthesis; L-histidine from 5-phospho-alpha-D-ribose 1-diphosphate: step 1/9. In terms of biological role, catalyzes the condensation of ATP and 5-phosphoribose 1-diphosphate to form N'-(5'-phosphoribosyl)-ATP (PR-ATP). Has a crucial role in the pathway because the rate of histidine biosynthesis seems to be controlled primarily by regulation of HisG enzymatic activity. This Anaeromyxobacter dehalogenans (strain 2CP-C) protein is ATP phosphoribosyltransferase.